The chain runs to 361 residues: Probable cadicidin biosynthesis thioesterase (361 aa).

The 28-residue stretch at 2–29 (RVTVDSEQCVGAGQCVLNAPEVFDQDDD) folds into the 4Fe-4S ferredoxin-type domain. Residues 36–110 (RADPTSGTTR…RRDSPVTTAD (75 aa)) are disordered. The span at 46 to 61 (RSARRATCARRPRSSS) shows a compositional bias: basic residues. 2 stretches are compositionally biased toward basic and acidic residues: residues 62–74 (RRTEPAGCADRHR) and 94–104 (TDRRQNHRRDS). The active site involves Ser-201.

This sequence belongs to the thioesterase family.

It participates in antibiotic biosynthesis; candicidin biosynthesis. In terms of biological role, probable thioesterase involved in the biosynthesis of candicidin. Could release the macrolide ring from the polyketide synthase. The protein is Probable cadicidin biosynthesis thioesterase of Streptomyces griseus.